The sequence spans 506 residues: Cytochrome P450 monooxygenase TES1 (506 aa).

Residues 26-46 (MSVVLAGLILLASIYFPRFMF) form a helical membrane-spanning segment. Asn-167, Asn-201, Asn-298, and Asn-427 each carry an N-linked (GlcNAc...) asparagine glycan. Position 440 (Cys-440) interacts with heme.

It belongs to the cytochrome P450 family. It depends on heme as a cofactor.

The protein resides in the membrane. It functions in the pathway phytotoxin biosynthesis. Functionally, cytochrome P450 monooxygenase; part of the gene cluster that mediates the biosynthesis of the phytotoxin tentoxin, an inhibitor the F1-ATPase activity of chloroplasts, resulting in chlorosis in sensitive plants. Tentoxin is a cyclic tetrapeptide that consists of four amino acid residues: glycine (Gly), alanine (Ala), leucine (Leu), and dehydrophenylalanine (DPhe). In addition, both the Ala and DPhe residues are N-methylated. The nonribosomal peptide synthetase TES assembles tentoxin from the four substrate amino acids. The adenylation domains of each of the 4 modules are responsible for the activation of Gly, Ala, Leu and DPhe, respectively. In addition, the N-methyltransferase domains in the second and fourth modules of TES could be responsible for N-methylation of Ala and DPhe residues. Finally, the condensation domain located in the termination module probably catalyzes the formation of the intramolecular macrocyclization and then the release of tentoxin. The cytochrome P450 monooxygenase TES1 is predicted to be involved in the formation of DPhe. This is Cytochrome P450 monooxygenase TES1 from Alternaria alternata (Alternaria rot fungus).